Here is a 348-residue protein sequence, read N- to C-terminus: Dihydroorotase (348 aa).

Zn(2+) contacts are provided by His17 and His19. Substrate contacts are provided by residues 19-21 (HLR) and Asn45. Zn(2+) contacts are provided by Lys103, His140, and His178. N6-carboxylysine is present on Lys103. A substrate-binding site is contributed by His140. Leu223 serves as a coordination point for substrate. Asp251 contributes to the Zn(2+) binding site. The active site involves Asp251. Residues His255 and Ala267 each coordinate substrate.

This sequence belongs to the metallo-dependent hydrolases superfamily. DHOase family. Class II DHOase subfamily. As to quaternary structure, homodimer. It depends on Zn(2+) as a cofactor.

It carries out the reaction (S)-dihydroorotate + H2O = N-carbamoyl-L-aspartate + H(+). It functions in the pathway pyrimidine metabolism; UMP biosynthesis via de novo pathway; (S)-dihydroorotate from bicarbonate: step 3/3. Its function is as follows. Catalyzes the reversible cyclization of carbamoyl aspartate to dihydroorotate. In Shigella boydii serotype 4 (strain Sb227), this protein is Dihydroorotase.